Reading from the N-terminus, the 74-residue chain is Cold shock-like protein CspD (74 aa).

Residues 4 to 64 form the CSD domain; sequence GTVKWFNNAK…GPKGNHASVI (61 aa).

As to quaternary structure, homodimer.

The protein resides in the cytoplasm. Inhibits DNA replication at both initiation and elongation steps, most probably by binding to the opened, single-stranded regions at replication forks. Plays a regulatory role in chromosomal replication in nutrient-depleted cells. This Escherichia coli O157:H7 protein is Cold shock-like protein CspD (cspD).